Here is a 450-residue protein sequence, read N- to C-terminus: Transcription factor SCREAM2 (450 aa).

3 disordered regions span residues 1–47 (MNSD…NQND), 207–231 (RQSSSSKMCNSESSSEMRKSSYERE), and 244–265 (GLNYESDDHNTNNNKGKKKGMP). Over residues 209–220 (SSSSKMCNSESS) the composition is skewed to low complexity. Over residues 221 to 230 (SEMRKSSYER) the composition is skewed to basic and acidic residues. The 50-residue stretch at 263 to 312 (GMPAKNLMAERRRRKKLNDRLYMLRSVVPKISKMDRASILGDAIDYLKEL) folds into the bHLH domain. Residues 378–450 (NIHMFCGRRP…LDTAGYAGLV (73 aa)) enclose the ACT domain.

As to quaternary structure, homodimer. Heterodimers with SPCH, MUTE, and FAMA. As to expression, expressed constitutively in roots, leaves, stems, and flowers. Broad expression within stomatal cell lineages of leaf epidermis, except in mature guard-cells.

It localises to the nucleus. Its function is as follows. Mediates stomatal differentiation in the epidermis probably by controlling successive roles of SPCH, MUTE, and FAMA. Functions as a dimer with SPCH during stomatal initiation. This is Transcription factor SCREAM2 (SCRM2) from Arabidopsis thaliana (Mouse-ear cress).